Here is a 732-residue protein sequence, read N- to C-terminus: Elongation factor 2 (732 aa).

The region spanning 19–260 is the tr-type G domain; sequence ERIRNMGIAA…MVVRHLPNPL (242 aa). Residues 28–35, 94–98, and 148–151 contribute to the GTP site; these read AHIDHGKT, DTPGH, and NKVD. H597 bears the Diphthamide mark.

Belongs to the TRAFAC class translation factor GTPase superfamily. Classic translation factor GTPase family. EF-G/EF-2 subfamily.

The protein resides in the cytoplasm. In terms of biological role, catalyzes the GTP-dependent ribosomal translocation step during translation elongation. During this step, the ribosome changes from the pre-translocational (PRE) to the post-translocational (POST) state as the newly formed A-site-bound peptidyl-tRNA and P-site-bound deacylated tRNA move to the P and E sites, respectively. Catalyzes the coordinated movement of the two tRNA molecules, the mRNA and conformational changes in the ribosome. The protein is Elongation factor 2 of Thermococcus onnurineus (strain NA1).